A 386-amino-acid chain; its full sequence is Succinate--CoA ligase [ADP-forming] subunit beta (386 aa).

In terms of domain architecture, ATP-grasp spans 9–244 (KQVLRSSNLN…DSQIDAKEAA (236 aa)). Residues Lys-46, 53–55 (GRG), Glu-99, Leu-102, and Glu-107 each bind ATP. Mg(2+) contacts are provided by Asn-199 and Asp-213. Substrate contacts are provided by residues Asn-264 and 321–323 (GIV).

This sequence belongs to the succinate/malate CoA ligase beta subunit family. In terms of assembly, heterotetramer of two alpha and two beta subunits. Mg(2+) serves as cofactor.

The catalysed reaction is succinate + ATP + CoA = succinyl-CoA + ADP + phosphate. The enzyme catalyses GTP + succinate + CoA = succinyl-CoA + GDP + phosphate. Its pathway is carbohydrate metabolism; tricarboxylic acid cycle; succinate from succinyl-CoA (ligase route): step 1/1. Its function is as follows. Succinyl-CoA synthetase functions in the citric acid cycle (TCA), coupling the hydrolysis of succinyl-CoA to the synthesis of either ATP or GTP and thus represents the only step of substrate-level phosphorylation in the TCA. The beta subunit provides nucleotide specificity of the enzyme and binds the substrate succinate, while the binding sites for coenzyme A and phosphate are found in the alpha subunit. The polypeptide is Succinate--CoA ligase [ADP-forming] subunit beta (Thiobacillus denitrificans (strain ATCC 25259 / T1)).